Here is a 210-residue protein sequence, read N- to C-terminus: Thioredoxin-like 3-1, chloroplastic (210 aa).

In terms of domain architecture, Thioredoxin spans 81–210 (WRLKAFWSNI…EVRELINKFV (130 aa)). Residues Cys-130 and Cys-133 each act as nucleophile in the active site. An intrachain disulfide couples Cys-130 to Cys-133.

This sequence belongs to the thioredoxin family.

Its subcellular location is the plastid. It is found in the chloroplast stroma. Functionally, probable thiol-disulfide oxidoreductase that may participate in various redox reactions. This is Thioredoxin-like 3-1, chloroplastic (WCRKC1) from Arabidopsis thaliana (Mouse-ear cress).